The following is a 603-amino-acid chain: uncharacterized protein (603 aa).

A Ubiquitin-like domain is found at 4 to 79 (YRIRVTTVDQ…VTFHLVIAVF (76 aa)). Disordered regions lie at residues 85 to 121 (TLPSATSSSVPQSRTSELSSTNSIPTPRITSLNPEEL), 159 to 178 (SLPTHEQSSPVAESLDNSVS), and 206 to 348 (AQES…NQPF). 2 stretches are compositionally biased toward polar residues: residues 94–117 (VPQSRTSELSSTNSIPTPRITSLN) and 162–178 (THEQSSPVAESLDNSVS). Over residues 219–231 (SSSSAPLASDQSP) the composition is skewed to low complexity. A compositionally biased stretch (polar residues) spans 246-264 (LGSNSGLNPRSPNSFSSPL). Low complexity predominate over residues 280–289 (SLSPLSNSSS). Residues 290–314 (INQVHQNETHGSTISVPNPNLSQMG) are compositionally biased toward polar residues. Over residues 315–329 (PSHSSSVPSNLSPNP) the composition is skewed to low complexity. A compositionally biased stretch (polar residues) spans 330-348 (AQNENPSTTSIPSINNQPF). Residues 496-516 (ILLTSIMSVVFLLQTGALAPF) traverse the membrane as a helical segment. A disordered region spans residues 544–578 (TAQRVVEIPNETQTEDEQDGTNTPDNRADAEEREL). T566 is modified (phosphothreonine). A compositionally biased stretch (basic and acidic residues) spans 569 to 578 (NRADAEEREL).

It localises to the endoplasmic reticulum membrane. This is an uncharacterized protein from Schizosaccharomyces pombe (strain 972 / ATCC 24843) (Fission yeast).